A 144-amino-acid polypeptide reads, in one-letter code: Single-stranded DNA-binding protein 3 (144 aa).

One can recognise an SSB domain in the interval 1-103 (MNKVVLIGRL…IVAEEVQFLE (103 aa)). A compositionally biased stretch (polar residues) spans 112–134 (MANDQFNNGNENGSMQLPDNNDI). Residues 112–144 (MANDQFNNGNENGSMQLPDNNDITPIDDGDIPF) are disordered.

In terms of assembly, homotetramer.

This is Single-stranded DNA-binding protein 3 (ssb3) from Clostridium acetobutylicum (strain ATCC 824 / DSM 792 / JCM 1419 / IAM 19013 / LMG 5710 / NBRC 13948 / NRRL B-527 / VKM B-1787 / 2291 / W).